The chain runs to 328 residues: MFIIKSMLYRLMQMIVVLFVISTLTFILMKLSPGNPVDKILHLDVAQVSMEQINATKDKLGLNDSLLVQWWHWMNHLLHFNLGKSFESKEPVTQILFNYAPITLLISFSTLVLSLCISIPLGIIAAKRFHKLSDKVIRVISTLSISLPAFFIGIILLFIVTNLMNIDSVILSQFILPVITLSLGMCAYIIRLVRSNLLMLLQSNIVQASRLRGMNERYILIHDLLKPTILPIIPLLGISLGSLIGGTVVIENLFDIPGIGYLLMDSIKSRDYPVIQGCVLFIGFFVVIINTIADLLTLLLDPKQRLQLGNPKSKANTPLISESSDRHA.

The next 6 helical transmembrane spans lie at 11 to 31 (LMQM…LMKL), 104 to 124 (LLIS…LGII), 139 to 159 (VIST…LLFI), 170 to 190 (ILSQ…AYII), 229 to 249 (ILPI…GTVV), and 279 to 299 (VLFI…LTLL). An ABC transmembrane type-1 domain is found at 100 to 297 (APITLLISFS…IINTIADLLT (198 aa)).

Belongs to the binding-protein-dependent transport system permease family. OppBC subfamily. As to quaternary structure, the complex is composed of two ATP-binding proteins (NikD and NikE), two transmembrane proteins (NikB and NikC) and a solute-binding protein (NikA).

The protein resides in the cell membrane. Its function is as follows. Part of the ABC transporter complex NikABCDE (Opp2) involved in nickel import. Probably responsible for the translocation of the substrate across the membrane. This is Nickel import system permease protein NikB from Staphylococcus aureus (strain bovine RF122 / ET3-1).